The sequence spans 160 residues: Small ribosomal subunit protein uS17z (160 aa).

It belongs to the universal ribosomal protein uS17 family.

The protein resides in the cytoplasm. The polypeptide is Small ribosomal subunit protein uS17z (RPS11A) (Arabidopsis thaliana (Mouse-ear cress)).